A 205-amino-acid polypeptide reads, in one-letter code: Urease accessory protein UreG (205 aa).

10–17 (GPVGAGKT) serves as a coordination point for GTP.

It belongs to the SIMIBI class G3E GTPase family. UreG subfamily. As to quaternary structure, homodimer. UreD, UreF and UreG form a complex that acts as a GTP-hydrolysis-dependent molecular chaperone, activating the urease apoprotein by helping to assemble the nickel containing metallocenter of UreC. The UreE protein probably delivers the nickel.

Its subcellular location is the cytoplasm. In terms of biological role, facilitates the functional incorporation of the urease nickel metallocenter. This process requires GTP hydrolysis, probably effectuated by UreG. The chain is Urease accessory protein UreG from Corynebacterium glutamicum (strain ATCC 13032 / DSM 20300 / JCM 1318 / BCRC 11384 / CCUG 27702 / LMG 3730 / NBRC 12168 / NCIMB 10025 / NRRL B-2784 / 534).